Consider the following 431-residue polypeptide: Na(+)/H(+) antiporter NhaA (431 aa).

The next 11 helical transmembrane spans lie at 33–53 (VGGA…NSPW), 74–94 (LSIS…VVGV), 112–132 (ALPI…FVGV), 144–164 (GWAI…AVIA), 173–193 (IFLL…IAVF), 197–217 (QLSF…GLAV), 225–245 (FLLL…GVHA), 279–299 (FAVP…LSGF), 311–331 (VIAG…YVLA), 347–367 (VLGL…IGEL), and 379–399 (AKIA…VVLL).

The protein belongs to the NhaA Na(+)/H(+) (TC 2.A.33) antiporter family.

The protein localises to the cell membrane. It carries out the reaction Na(+)(in) + 2 H(+)(out) = Na(+)(out) + 2 H(+)(in). Functionally, na(+)/H(+) antiporter that extrudes sodium in exchange for external protons. The sequence is that of Na(+)/H(+) antiporter NhaA from Mycolicibacterium smegmatis (strain ATCC 700084 / mc(2)155) (Mycobacterium smegmatis).